Here is a 198-residue protein sequence, read N- to C-terminus: Ribonuclease HII (198 aa).

Positions 10–198 (HLVAGVDEVG…PVKRALELAS (189 aa)) constitute an RNase H type-2 domain. Residues aspartate 16, glutamate 17, and aspartate 108 each coordinate a divalent metal cation.

The protein belongs to the RNase HII family. The cofactor is Mn(2+). It depends on Mg(2+) as a cofactor.

The protein localises to the cytoplasm. It carries out the reaction Endonucleolytic cleavage to 5'-phosphomonoester.. In terms of biological role, endonuclease that specifically degrades the RNA of RNA-DNA hybrids. The sequence is that of Ribonuclease HII from Salmonella arizonae (strain ATCC BAA-731 / CDC346-86 / RSK2980).